Here is a 443-residue protein sequence, read N- to C-terminus: Glutamate--tRNA ligase 1 (443 aa).

The short motif at 9–19 (PSPTGYLHVGN) is the 'HIGH' region element. The short motif at 238 to 242 (KISKR) is the 'KMSKS' region element. Lys241 provides a ligand contact to ATP.

Belongs to the class-I aminoacyl-tRNA synthetase family. Glutamate--tRNA ligase type 1 subfamily. In terms of assembly, monomer.

It localises to the cytoplasm. The catalysed reaction is tRNA(Glu) + L-glutamate + ATP = L-glutamyl-tRNA(Glu) + AMP + diphosphate. Catalyzes the attachment of glutamate to tRNA(Glu) in a two-step reaction: glutamate is first activated by ATP to form Glu-AMP and then transferred to the acceptor end of tRNA(Glu). This Ehrlichia ruminantium (strain Welgevonden) protein is Glutamate--tRNA ligase 1.